Consider the following 469-residue polypeptide: 23S rRNA (uracil(1939)-C(5))-methyltransferase RlmD (469 aa).

In terms of domain architecture, TRAM spans 11–69 (PKTSNQRLTVTVDKLDMNGVGVARWQNKPIFIAGVLPDEIVDVKVIEQKSKYARAKLIS). C82, C88, C91, and C178 together coordinate [4Fe-4S] cluster. S-adenosyl-L-methionine is bound by residues Q300, F329, N334, E350, D377, and D399. C425 acts as the Nucleophile in catalysis.

The protein belongs to the class I-like SAM-binding methyltransferase superfamily. RNA M5U methyltransferase family. RlmD subfamily.

The catalysed reaction is uridine(1939) in 23S rRNA + S-adenosyl-L-methionine = 5-methyluridine(1939) in 23S rRNA + S-adenosyl-L-homocysteine + H(+). Its function is as follows. Catalyzes the formation of 5-methyl-uridine at position 1939 (m5U1939) in 23S rRNA. The polypeptide is 23S rRNA (uracil(1939)-C(5))-methyltransferase RlmD (Colwellia psychrerythraea (strain 34H / ATCC BAA-681) (Vibrio psychroerythus)).